The sequence spans 488 residues: 3-octaprenyl-4-hydroxybenzoate carboxy-lyase (488 aa).

Position 172 (Asn172) interacts with Mn(2+). Prenylated FMN contacts are provided by residues 175-177 (IYR), 189-191 (RWL), and 194-195 (RG). Glu238 is a binding site for Mn(2+). The active-site Proton donor is Asp287.

The protein belongs to the UbiD family. As to quaternary structure, homohexamer. Requires prenylated FMN as cofactor. Mn(2+) is required as a cofactor.

Its subcellular location is the cell membrane. It carries out the reaction a 4-hydroxy-3-(all-trans-polyprenyl)benzoate + H(+) = a 2-(all-trans-polyprenyl)phenol + CO2. Its pathway is cofactor biosynthesis; ubiquinone biosynthesis. Its function is as follows. Catalyzes the decarboxylation of 3-octaprenyl-4-hydroxy benzoate to 2-octaprenylphenol, an intermediate step in ubiquinone biosynthesis. The sequence is that of 3-octaprenyl-4-hydroxybenzoate carboxy-lyase from Pseudomonas paraeruginosa (strain DSM 24068 / PA7) (Pseudomonas aeruginosa (strain PA7)).